The chain runs to 290 residues: MVKVEIDEGSGFCFGVVTAIHKAEEELAKGVTLYCLGDIVHNSREVERLKEMGLITINHEEFKQLHNAKVLLRAHGEPPETYIIAKENNIEIIDATCPVVLRLQKRIKQEYMQEDLDEKQIVIYGKNGHAEVLGLVGQTTGKAIVIEKLDEARRLDFSKSIRLYSQTTKSLDEFWEIVEYIKEHISPDVTFEYYDTICRQVANRMPNLRKFAASHDLIFFVSGKKSSNGKMLFEECKKVNPNSHLIDSADEIDDSLLPGVNSIGVCGATSTPKWLMEEISEAIKAQIKRQ.

C13 is a binding site for [4Fe-4S] cluster. Residues H41 and H75 each contribute to the (2E)-4-hydroxy-3-methylbut-2-enyl diphosphate site. H41 and H75 together coordinate dimethylallyl diphosphate. H41 and H75 together coordinate isopentenyl diphosphate. C97 is a binding site for [4Fe-4S] cluster. H129 contributes to the (2E)-4-hydroxy-3-methylbut-2-enyl diphosphate binding site. A dimethylallyl diphosphate-binding site is contributed by H129. Residue H129 coordinates isopentenyl diphosphate. E131 (proton donor) is an active-site residue. T167 contacts (2E)-4-hydroxy-3-methylbut-2-enyl diphosphate. C198 contacts [4Fe-4S] cluster. S226, S227, N228, and S270 together coordinate (2E)-4-hydroxy-3-methylbut-2-enyl diphosphate. Dimethylallyl diphosphate-binding residues include S226, S227, N228, and S270. Isopentenyl diphosphate-binding residues include S226, S227, N228, and S270.

The protein belongs to the IspH family. Requires [4Fe-4S] cluster as cofactor.

The catalysed reaction is isopentenyl diphosphate + 2 oxidized [2Fe-2S]-[ferredoxin] + H2O = (2E)-4-hydroxy-3-methylbut-2-enyl diphosphate + 2 reduced [2Fe-2S]-[ferredoxin] + 2 H(+). It carries out the reaction dimethylallyl diphosphate + 2 oxidized [2Fe-2S]-[ferredoxin] + H2O = (2E)-4-hydroxy-3-methylbut-2-enyl diphosphate + 2 reduced [2Fe-2S]-[ferredoxin] + 2 H(+). It functions in the pathway isoprenoid biosynthesis; dimethylallyl diphosphate biosynthesis; dimethylallyl diphosphate from (2E)-4-hydroxy-3-methylbutenyl diphosphate: step 1/1. It participates in isoprenoid biosynthesis; isopentenyl diphosphate biosynthesis via DXP pathway; isopentenyl diphosphate from 1-deoxy-D-xylulose 5-phosphate: step 6/6. Its function is as follows. Catalyzes the conversion of 1-hydroxy-2-methyl-2-(E)-butenyl 4-diphosphate (HMBPP) into a mixture of isopentenyl diphosphate (IPP) and dimethylallyl diphosphate (DMAPP). Acts in the terminal step of the DOXP/MEP pathway for isoprenoid precursor biosynthesis. The protein is 4-hydroxy-3-methylbut-2-enyl diphosphate reductase of Bacteroides fragilis (strain ATCC 25285 / DSM 2151 / CCUG 4856 / JCM 11019 / LMG 10263 / NCTC 9343 / Onslow / VPI 2553 / EN-2).